The primary structure comprises 105 residues: uncharacterized protein (105 aa).

The protein localises to the cytoplasm. Its subcellular location is the nucleus. This is an uncharacterized protein from Schizosaccharomyces pombe (strain 972 / ATCC 24843) (Fission yeast).